The sequence spans 208 residues: Small ribosomal subunit protein uS4 (208 aa).

The 61-residue stretch at 98-158 (RRLDNVVYRL…EKSRGQLRIK (61 aa)) folds into the S4 RNA-binding domain.

This sequence belongs to the universal ribosomal protein uS4 family. Part of the 30S ribosomal subunit. Contacts protein S5. The interaction surface between S4 and S5 is involved in control of translational fidelity.

Its function is as follows. One of the primary rRNA binding proteins, it binds directly to 16S rRNA where it nucleates assembly of the body of the 30S subunit. With S5 and S12 plays an important role in translational accuracy. The chain is Small ribosomal subunit protein uS4 from Magnetococcus marinus (strain ATCC BAA-1437 / JCM 17883 / MC-1).